Reading from the N-terminus, the 282-residue chain is Phospholipid phosphatase 1 (282 aa).

Topologically, residues 1–6 are cytoplasmic; sequence MFDKPR. The short motif at 5 to 7 is the PDZ-binding; involved in localization to the apical cell membrane element; that stretch reads PRL. The helical transmembrane segment at 7–27 threads the bilayer; that stretch reads LPYVVLDVICVLLAGLPFIIL. Over 28 to 53 the chain is Extracellular; the sequence is TSRHTPFQRGVFCTDESIKYPYREDT. A helical membrane pass occupies residues 54–74; that stretch reads IPYALLGGIVIPFCIIVMITG. At 75–88 the chain is on the cytoplasmic side; the sequence is ETLSVYFNVLHSNS. The chain crosses the membrane as a helical span at residues 89 to 109; that stretch reads FVSNHYIATIYKAVGAFLFGA. Residues 110–164 are Extracellular-facing; it reads SASQSLTDIAKYSIGRLRPHFLAVCNPDWSKINCSDGYIENFVCQGNEQKVREGR. Residues 120-128 are phosphatase sequence motif I; it reads KYSIGRLRP. The N-linked (GlcNAc...) asparagine glycan is linked to Asn-142. A helical transmembrane segment spans residues 165-185; it reads LSFYSGHSSFSMYCMLFVALY. Residues 168 to 171 are phosphatase sequence motif II; sequence YSGH. Catalysis depends on His-171, which acts as the Proton donors. Residues 186–194 are Cytoplasmic-facing; it reads LQARMKGDW. Residues 195 to 215 traverse the membrane as a helical segment; it reads ARLLRPMLQFGLVALSIYVGL. Residues 216–227 form a phosphatase sequence motif III region; sequence SRVSDYKHHWSD. Over 216–229 the chain is Extracellular; that stretch reads SRVSDYKHHWSDVL. Residue His-223 is the Nucleophile of the active site. Residues 230-250 traverse the membrane as a helical segment; that stretch reads IGLIQGAVVAILVVLYVTDFF. Residues 251 to 282 are Cytoplasmic-facing; the sequence is KTTESNKERKEDSHTTLHETTNRQSYARNHEP. The span at 257–271 shows a compositional bias: basic and acidic residues; it reads KERKEDSHTTLHETT. Residues 257–282 are disordered; the sequence is KERKEDSHTTLHETTNRQSYARNHEP. Over residues 272 to 282 the composition is skewed to polar residues; that stretch reads NRQSYARNHEP.

The protein belongs to the PA-phosphatase related phosphoesterase family. As to quaternary structure, forms functional homodimers and homooligomers that are not required for substrate recognition and catalytic activity. Can also form heterooligomers with PLPP2 and PLPP3. In terms of processing, N-glycosylated. N-linked sugars are of the complex type. N-glycosylation is not required for the phosphatase activity.

The protein resides in the cell membrane. The protein localises to the apical cell membrane. Its subcellular location is the membrane raft. It is found in the membrane. It localises to the caveola. The catalysed reaction is a 1,2-diacyl-sn-glycero-3-phosphate + H2O = a 1,2-diacyl-sn-glycerol + phosphate. It carries out the reaction 1,2-dihexadecanoyl-sn-glycero-3-phosphate + H2O = 1,2-dihexadecanoyl-sn-glycerol + phosphate. The enzyme catalyses 1,2-di-(9Z-octadecenoyl)-sn-glycero-3-phosphate + H2O = 1,2-di-(9Z-octadecenoyl)-sn-glycerol + phosphate. It catalyses the reaction a monoacyl-sn-glycero-3-phosphate + H2O = a monoacylglycerol + phosphate. The catalysed reaction is (9Z)-octadecenoyl-sn-glycero-3-phosphate + H2O = (9Z-octadecenoyl)-glycerol + phosphate. It carries out the reaction a 1-acyl-sn-glycero-3-phosphate + H2O = a 1-acyl-sn-glycerol + phosphate. The enzyme catalyses 1-(9Z-octadecenoyl)-sn-glycero-3-phosphate + H2O = 1-(9Z-octadecenoyl)-sn-glycerol + phosphate. It catalyses the reaction a 1,2-diacyl-sn-glycerol 3-diphosphate + H2O = a 1,2-diacyl-sn-glycero-3-phosphate + phosphate + H(+). The catalysed reaction is sphing-4-enine 1-phosphate + H2O = sphing-4-enine + phosphate. It carries out the reaction an N-acylsphing-4-enine 1-phosphate + H2O = an N-acylsphing-4-enine + phosphate. The enzyme catalyses N-(octanoyl)-sphing-4-enine-1-phosphate + H2O = N-octanoylsphing-4-enine + phosphate. It catalyses the reaction N-(9Z-octadecenoyl)-ethanolamine phosphate + H2O = N-(9Z-octadecenoyl) ethanolamine + phosphate. The catalysed reaction is 1-hexadecanoyl-2-(9Z-octadecenoyl)-sn-glycero-3-phosphate + H2O = 1-hexadecanoyl-2-(9Z-octadecenoyl)-sn-glycerol + phosphate. It functions in the pathway lipid metabolism; phospholipid metabolism. Its activity is regulated as follows. Magnesium-independent phospholipid phosphatase. Insensitive to N-ethylmaleimide. Magnesium-independent phospholipid phosphatase of the plasma membrane that catalyzes the dephosphorylation of a variety of glycerolipid and sphingolipid phosphate esters including phosphatidate/PA, lysophosphatidate/LPA, diacylglycerol pyrophosphate/DGPP, sphingosine 1-phosphate/S1P and ceramide 1-phosphate/C1P. Also acts on N-oleoyl ethanolamine phosphate/N-(9Z-octadecenoyl)-ethanolamine phosphate, a potential physiological compound. Through its extracellular phosphatase activity allows both the hydrolysis and the cellular uptake of these bioactive lipid mediators from the milieu, regulating signal transduction in different cellular processes. It is for instance essential for the extracellular hydrolysis of S1P and subsequent conversion into intracellular S1P. Involved in the regulation of inflammation, platelets activation, cell proliferation and migration among other processes. May also have an intracellular activity to regulate phospholipid-mediated signaling pathways. This is Phospholipid phosphatase 1 from Rattus norvegicus (Rat).